The chain runs to 357 residues: Non-structural protein NS2 (357 aa).

Disordered regions lie at residues 162-199 and 228-268; these read QNER…AKEM and LDEK…KTHI. 2 stretches are compositionally biased toward acidic residues: residues 230 to 243 and 250 to 260; these read EKDE…EDEE and DDDEQGEDASD.

It belongs to the orbivirus non-structural protein NS2 family.

In terms of biological role, single-stranded RNA-binding protein. The protein is Non-structural protein NS2 (Segment-8) of Antilocapra americana (Pronghorn).